The chain runs to 544 residues: MTTEIEKELETSEAVLEKRRNFAIISHPDAGKTTLTEKLLLYGGAIHQAGAVKARRDQRKATSDWMEMEKQRGISITSTVLQFDYRDFQINLLDTPGHQDFSEDTYRTLAAADNAVMLIDAAKGLEPQTRKLFEVCKLRQLPIFTFVNKMDRPGREPLDLLDEIERELGLQTYPVNWPIGIGDRFRGVFDRATQTIHLFERRSHGSQEAQETVIELGDPKIEDYLEKDLYYQLKEDIELLSELGAELDLPAVHAGEMTPIFFGSAMTNFGVKLFLESFLDYGLAPRGRNSSLGVLDPTYPDFTGFVFKLQANMDPKHRDRVAFVRVCTGKFEKDMVVNHARTGKTIRLSRPQKLFAQDRAVIEEAYPGDVIGLNNPGVFAIGDTIYMGKKLEYEGIPCFSPELFAYLRNPNPSKFKQFQKGVSELQEEGAVQILSSIDEFKRDPILAAVGQLQFEVVQFRLLSEYGVETTLEPLAYSLARWVAGGWAALEKAGKLFNTLTVKDYWGRPVLLFKNEWNLQQVKEDHPSLQLNSIAPVGSGVQPQS.

Positions 17–286 (EKRRNFAIIS…SFLDYGLAPR (270 aa)) constitute a tr-type G domain. GTP is bound by residues 26–33 (SHPDAGKT), 94–98 (DTPGH), and 148–151 (NKMD).

Belongs to the TRAFAC class translation factor GTPase superfamily. Classic translation factor GTPase family. PrfC subfamily.

Its subcellular location is the cytoplasm. Increases the formation of ribosomal termination complexes and stimulates activities of RF-1 and RF-2. It binds guanine nucleotides and has strong preference for UGA stop codons. It may interact directly with the ribosome. The stimulation of RF-1 and RF-2 is significantly reduced by GTP and GDP, but not by GMP. This Microcystis aeruginosa (strain NIES-843 / IAM M-2473) protein is Peptide chain release factor 3.